The primary structure comprises 536 residues: Cytochrome P450 monooxygenase macC (536 aa).

Residues 2 to 22 (ALLYITTAALALLLLFLRAVF) traverse the membrane as a helical segment. Cys-448 is a binding site for heme.

Belongs to the cytochrome P450 family. Requires heme as cofactor.

It localises to the membrane. The protein operates within secondary metabolite biosynthesis; terpenoid biosynthesis. Functionally, cytochrome P450 monooxygenase; part of the gene cluster that mediates the biosynthesis of macrophorins, isoprenoid epoxycyclohexenones containing cyclized drimane moieties. The first step of the pathway is the synthesis of 6-methylsalicylic acid (6-MSA) by the polyketide synthase macA. 6-MSA is then converted to m-cresol by the decarboxylase macB. The cytochrome P450 monooxygenase macC then catalyzes the oxidation of m-cresol to toluquinol. Epoxidation of toluquinol is then performed by the short chain dehydrogenase macD, with the help of macE, and a further prenylation by macG leads to 7-deacetoxyyanuthone A. The next step is the hydroxylation of C-22 of 7-deacetoxyyanuthone A by the cytochrome P450 monooxygenase macH to yield 22-deacetylyanuthone A. O-Mevalon transferase macI then attaches mevalon to the hydroxyl group of 22-deacetylyanuthone A to produce yanuthone E. The terpene cyclase macJ catalyzes the cyclization of 22-deacetylyanuthone A to macrophorin A. MacJ is also able to catalyze cyclization of yanuthone E and 7-deacetoxyyanuthone A to their corresponding macrophorins. The macJ products can be further modified by macH and macJ, as well as by the FAD-dependent monooxygenase macF, to produce additional macrophorins, including 4'-oxomacrophorin A, 4'-oxomacrophorin D and 4'-oxomacrophorin E. The polypeptide is Cytochrome P450 monooxygenase macC (Penicillium terrestre).